We begin with the raw amino-acid sequence, 211 residues long: Redox-sensing transcriptional repressor Rex (211 aa).

Residues 17–56 constitute a DNA-binding region (H-T-H motif); it reads LYYRFVSILKGKGIDRVNSKTISEALQIDSATIRRDFSYF. An NAD(+)-binding site is contributed by 91–96; the sequence is GIGNLG.

The protein belongs to the transcriptional regulatory Rex family. In terms of assembly, homodimer.

It is found in the cytoplasm. Its function is as follows. Modulates transcription in response to changes in cellular NADH/NAD(+) redox state. The chain is Redox-sensing transcriptional repressor Rex from Staphylococcus epidermidis (strain ATCC 35984 / DSM 28319 / BCRC 17069 / CCUG 31568 / BM 3577 / RP62A).